The sequence spans 269 residues: Endo-1,3-1,4-beta-glycanase ExoK (269 aa).

The first 29 residues, 1 to 29 (MTIDRYRRFARLAFIATLPLAGLATAAAA), serve as a signal peptide directing secretion. One can recognise a GH16 domain in the interval 40 to 252 (DDFDTLDTRV…RVAFTAAGDE (213 aa)). Glutamate 138 serves as the catalytic Nucleophile. Residue glutamate 142 is the Proton donor of the active site.

It belongs to the glycosyl hydrolase 16 family.

It localises to the secreted. The protein operates within glycan metabolism; exopolysaccharide biosynthesis. Cleaves high molecular weight succinoglycan to yield LMW succinoglycan. Dynamically regulates the molecular weight distribution of succinoglycan by cleaving nascent succinoglycan only during a limited period after its synthesis, perhaps before it undergoes a time-dependent change in its conformation or aggregation state. This is Endo-1,3-1,4-beta-glycanase ExoK (exoK) from Rhizobium meliloti (strain 1021) (Ensifer meliloti).